A 180-amino-acid chain; its full sequence is Cell division protein SepF (180 aa).

The disordered stretch occupies residues 21–40 (LDDDYDDGRAVGRDDRRAMH). A compositionally biased stretch (basic and acidic residues) spans 27 to 40 (DGRAVGRDDRRAMH).

This sequence belongs to the SepF family. Homodimer. Interacts with FtsZ.

Its subcellular location is the cytoplasm. Its function is as follows. Cell division protein that is part of the divisome complex and is recruited early to the Z-ring. Probably stimulates Z-ring formation, perhaps through the cross-linking of FtsZ protofilaments. Its function overlaps with FtsA. The polypeptide is Cell division protein SepF (Frankia casuarinae (strain DSM 45818 / CECT 9043 / HFP020203 / CcI3)).